The sequence spans 470 residues: Uronate isomerase (470 aa).

This sequence belongs to the metallo-dependent hydrolases superfamily. Uronate isomerase family.

It catalyses the reaction D-glucuronate = D-fructuronate. The enzyme catalyses aldehydo-D-galacturonate = keto-D-tagaturonate. It participates in carbohydrate metabolism; pentose and glucuronate interconversion. The chain is Uronate isomerase from Shigella boydii serotype 4 (strain Sb227).